A 127-amino-acid chain; its full sequence is Large ribosomal subunit protein bL12 (127 aa).

It belongs to the bacterial ribosomal protein bL12 family. As to quaternary structure, homodimer. Part of the ribosomal stalk of the 50S ribosomal subunit. Forms a multimeric L10(L12)X complex, where L10 forms an elongated spine to which 2 to 4 L12 dimers bind in a sequential fashion. Binds GTP-bound translation factors.

In terms of biological role, forms part of the ribosomal stalk which helps the ribosome interact with GTP-bound translation factors. Is thus essential for accurate translation. This chain is Large ribosomal subunit protein bL12, found in Bordetella bronchiseptica (strain ATCC BAA-588 / NCTC 13252 / RB50) (Alcaligenes bronchisepticus).